Here is a 940-residue protein sequence, read N- to C-terminus: Translation initiation factor IF-2 (940 aa).

Disordered stretches follow at residues 48 to 264 (ESFG…VESK) and 278 to 351 (QVAE…TERK). Basic and acidic residues-rich tracts occupy residues 65–95 (SKPE…KEEV), 112–125 (FKAE…EQAA), 155–206 (NNER…REAA), 232–258 (RTSE…KFEE), and 292–301 (ARPDKKRDFN). The span at 314-332 (NRNSQNQVRNQRTSNWNNN) shows a compositional bias: low complexity. Positions 442-609 (ERPPVVTIMG…TVLLVAEIQE (168 aa)) constitute a tr-type G domain. The interval 451–458 (GHVDHGKT) is G1. 451-458 (GHVDHGKT) contributes to the GTP binding site. The interval 476–480 (GITQH) is G2. A G3 region spans residues 497–500 (DTPG). GTP contacts are provided by residues 497 to 501 (DTPGH) and 551 to 554 (NKID). The interval 551 to 554 (NKID) is G4. The tract at residues 587–589 (SAK) is G5.

This sequence belongs to the TRAFAC class translation factor GTPase superfamily. Classic translation factor GTPase family. IF-2 subfamily.

It localises to the cytoplasm. In terms of biological role, one of the essential components for the initiation of protein synthesis. Protects formylmethionyl-tRNA from spontaneous hydrolysis and promotes its binding to the 30S ribosomal subunits. Also involved in the hydrolysis of GTP during the formation of the 70S ribosomal complex. The sequence is that of Translation initiation factor IF-2 from Streptococcus suis (strain 98HAH33).